A 388-amino-acid chain; its full sequence is MPQLSQDNQECLQKHFSRPSIWTQFLPLFRAQRYNTDIHQITENEGDLRAVPDIKSFPPAQLPDSPAAPKLFGLLSSPLSSLARFFSHLLRRPPPEAPRRRLDFSPLLPALPAARLSRGHEELPGRLSLLLGAALALPGRPSGGRPLRPPHPVAKPREEDATAGQSSPMPQMGSERMEMRKRQMPAAQDTPGAAPGQPGAGSRGSNACCFCWCCCCSCSCLTVRNQEDQRPTIASHELRADLPTWEESPAPTLEEVNAWAQSFDKLMVTPAGRNAFREFLRTEFSEENMLFWMACEELKKEANKNIIEEKARIIYEDYISILSPKEVSLDSRVREVINRNMVEPSQHIFDDAQLQIYTLMHRDSYPRFMNSAVYKDLLQSLSEKSIEA.

The disordered stretch occupies residues 138–199 (PGRPSGGRPL…TPGAAPGQPG (62 aa)). Low complexity predominate over residues 185 to 197 (PAAQDTPGAAPGQ). The RGS domain occupies 262–378 (SFDKLMVTPA…MNSAVYKDLL (117 aa)).

In terms of assembly, forms a complex with G(alpha)z/i2 subunits and mu-opioid receptors; the formation of this complex results in mu-opioid receptor desensitization. Interacts with OPRM1. Fatty acylated. Heavily palmitoylated in the cysteine string motif. In terms of processing, N- and O-glycosylated in synapsomal membranes. Post-translationally, serine phosphorylated in synapsomal membranes. Sumoylated with SUMO1 and SUMO2 in synaptosomes. The sumoylated forms act as a scaffold for sequestering mu-opioid receptor-activated G(alpha) subunits. Isoform 5 is expressed in brain at high levels in the caudate nucleus and temporal lobe.

It localises to the membrane. The protein localises to the nucleus. Its subcellular location is the cytoplasm. Inhibits signal transduction by increasing the GTPase activity of G protein alpha subunits thereby driving them into their inactive GDP-bound form. Binds selectively to G(z)-alpha and G(alpha)-i2 subunits, accelerates their GTPase activity and regulates their signaling activities. The G(z)-alpha activity is inhibited by the phosphorylation and palmitoylation of the G-protein. Negatively regulates mu-opioid receptor-mediated activation of the G-proteins. The sequence is that of Regulator of G-protein signaling 20 (RGS20) from Homo sapiens (Human).